A 255-amino-acid polypeptide reads, in one-letter code: 5'-nucleotidase SurE (255 aa).

Asp8, Asp9, Ser40, and Asn92 together coordinate a divalent metal cation.

Belongs to the SurE nucleotidase family. Requires a divalent metal cation as cofactor.

The protein localises to the cytoplasm. It carries out the reaction a ribonucleoside 5'-phosphate + H2O = a ribonucleoside + phosphate. Its function is as follows. Nucleotidase that shows phosphatase activity on nucleoside 5'-monophosphates. This chain is 5'-nucleotidase SurE, found in Brucella suis (strain ATCC 23445 / NCTC 10510).